The primary structure comprises 2694 residues: Neurobeachin-like protein 1 (2694 aa).

Disordered regions lie at residues 1289–1314 (VLMK…TDEE), 1330–1350 (SLED…DSSV), and 1381–1411 (CEMS…SVHS). Over residues 1290–1314 (LMKDNDKNMSTEDTKKNSDEKTDEE) the composition is skewed to basic and acidic residues. The segment covering 1383 to 1409 (MSDSGSQVPDSLPSTPSPVESTKSFSV) has biased composition (polar residues). Residues 1883–1980 (DQKEKLVLME…VRNKIYSRLL (98 aa)) form the BEACH-type PH domain. The BEACH domain occupies 1992-2284 (RSPQELFKAS…QLLKEPHPPR (293 aa)). 2 WD repeats span residues 2439 to 2478 (RHMD…GVPV) and 2490 to 2531 (GHTN…RTLR).

This sequence belongs to the WD repeat neurobeachin family. In terms of tissue distribution, highly expressed in brain, kidney, prostate and testis. Weakly expressed in ovary, small intestine, colon and peripheral blood leukocytes. May be correlative to several tumors, such as ovary serous adenocarcinoma and metastasis mammary gland carcinoma breast.

This chain is Neurobeachin-like protein 1 (NBEAL1), found in Homo sapiens (Human).